Reading from the N-terminus, the 897-residue chain is Isoleucine--tRNA ligase (897 aa).

Positions 59–69 (PYANGDIHVGH) match the 'HIGH' region motif. Residue glutamate 552 participates in L-isoleucyl-5'-AMP binding. The 'KMSKS' region signature appears at 593 to 597 (KMSKS). ATP is bound at residue lysine 596. 4 residues coordinate Zn(2+): cysteine 872, cysteine 875, cysteine 890, and cysteine 893.

It belongs to the class-I aminoacyl-tRNA synthetase family. IleS type 1 subfamily. Monomer. Requires Zn(2+) as cofactor.

The protein localises to the cytoplasm. It catalyses the reaction tRNA(Ile) + L-isoleucine + ATP = L-isoleucyl-tRNA(Ile) + AMP + diphosphate. Its function is as follows. Catalyzes the attachment of isoleucine to tRNA(Ile). As IleRS can inadvertently accommodate and process structurally similar amino acids such as valine, to avoid such errors it has two additional distinct tRNA(Ile)-dependent editing activities. One activity is designated as 'pretransfer' editing and involves the hydrolysis of activated Val-AMP. The other activity is designated 'posttransfer' editing and involves deacylation of mischarged Val-tRNA(Ile). This is Isoleucine--tRNA ligase from Mycoplasmoides gallisepticum (strain R(low / passage 15 / clone 2)) (Mycoplasma gallisepticum).